The primary structure comprises 420 residues: UDP-N-acetylglucosamine 1-carboxyvinyltransferase (420 aa).

Phosphoenolpyruvate is bound at residue 22–23 (KN). UDP-N-acetyl-alpha-D-glucosamine is bound at residue Arg94. The active-site Proton donor is the Cys118. Cys118 bears the 2-(S-cysteinyl)pyruvic acid O-phosphothioketal mark. Residues Asp307 and Ile329 each coordinate UDP-N-acetyl-alpha-D-glucosamine.

The protein belongs to the EPSP synthase family. MurA subfamily.

The protein resides in the cytoplasm. It carries out the reaction phosphoenolpyruvate + UDP-N-acetyl-alpha-D-glucosamine = UDP-N-acetyl-3-O-(1-carboxyvinyl)-alpha-D-glucosamine + phosphate. It participates in cell wall biogenesis; peptidoglycan biosynthesis. Cell wall formation. Adds enolpyruvyl to UDP-N-acetylglucosamine. In Gluconacetobacter diazotrophicus (strain ATCC 49037 / DSM 5601 / CCUG 37298 / CIP 103539 / LMG 7603 / PAl5), this protein is UDP-N-acetylglucosamine 1-carboxyvinyltransferase.